A 501-amino-acid polypeptide reads, in one-letter code: Cystine/glutamate transporter (501 aa).

Residues 1-43 (MVRKPVVSTISKGGYLQGNVNGRLPSLGNKEPPGQEKVQLKRK) lie on the Cytoplasmic side of the membrane. At S26 the chain carries Phosphoserine. The helical transmembrane segment at 44-64 (VTLLRGVSIIIGTIIGAGIFI) threads the bilayer. Topologically, residues 65-74 (SPKGVLQNTG) are extracellular. The chain crosses the membrane as a helical span at residues 75 to 95 (SVGMSLTIWTVCGVLSLFGAL). The Cytoplasmic portion of the chain corresponds to 96–101 (SYAELG). Residues 102 to 116 (TTIKKSGGHYTYILE) lie within the membrane without spanning it. At 117–130 (VFGPLPAFVRVWVE) the chain is on the cytoplasmic side. A helical transmembrane segment spans residues 131–150 (LLIIRPAATAVISLAFGRYI). An L-glutamate-binding site is contributed by R135. Residues 151–163 (LEPFFIQCEIPEL) lie on the Extracellular side of the membrane. The chain crosses the membrane as a helical span at residues 164–179 (AIKLITAVGITVVMVL). At 180–193 (NSMSVSWSARIQIF) the chain is on the cytoplasmic side. A helical membrane pass occupies residues 194 to 210 (LTFCKLTAILIIIVPGV). Residues 211–234 (MQLIKGQTQNFKDAFSGRDSSITR) lie on the Extracellular side of the membrane. Residues 235–255 (LPLAFYYGMYAYAGWFYLNFV) form a helical membrane-spanning segment. Y244 is a binding site for L-glutamate. Topologically, residues 256-265 (TEEVENPEKT) are cytoplasmic. A helical membrane pass occupies residues 266-286 (IPLAICISMAIVTIGYVLTNV). Residues 287-317 (AYFTTINAEELLLSNAVAVTFSERLLGNFSL) lie on the Extracellular side of the membrane. The N-linked (GlcNAc...) asparagine glycan is linked to N314. A helical membrane pass occupies residues 318-338 (AVPIFVALSCFGSMNGGVFAV). The Cytoplasmic segment spans residues 339 to 364 (SRLFYVASREGHLPEILSMIHVRKHT). The chain crosses the membrane as a helical span at residues 365 to 385 (PLPAVIVLHPLTMIMLFSGDL). Topologically, residues 386–387 (DS) are extracellular. A helical transmembrane segment spans residues 388-408 (LLNFLSFARWLFIGLAVAGLI). The Cytoplasmic segment spans residues 409–422 (YLRYKCPDMHRPFK). A helical transmembrane segment spans residues 423-443 (VPLFIPALFSFTCLFMVALSL). The Extracellular segment spans residues 444–449 (YSDPFS). The chain crosses the membrane as a helical span at residues 450–470 (TGIGSVITLTGVPAYYLFIIW). Residues 471 to 501 (DKKPRWFRIMSEKITRTLQIILEVVPEEDKL) are Cytoplasmic-facing.

It belongs to the amino acid-polyamine-organocation (APC) superfamily. L-type amino acid transporter (LAT) (TC 2.A.3.8) family. Disulfide-linked heterodimer with the amino acid transport protein SLC3A2/4F2hc; this interaction mediates cell membrane localization.

Its subcellular location is the cell membrane. It is found in the cell projection. The protein resides in the microvillus membrane. It carries out the reaction L-cystine(out) + L-glutamate(in) = L-cystine(in) + L-glutamate(out). It catalyses the reaction an L-alpha-amino acid(in) + L-kynurenine(out) = an L-alpha-amino acid(out) + L-kynurenine(in). The catalysed reaction is N-acetyl-L-cysteine(out) + L-glutamate(in) = N-acetyl-L-cysteine(in) + L-glutamate(out). Its function is as follows. Heterodimer with SLC3A2, that functions as an antiporter by mediating the exchange of extracellular anionic L-cystine and intracellular L-glutamate across the cellular plasma membrane. Provides L-cystine for the maintenance of the redox balance between extracellular L-cystine and L-cysteine and for the maintenance of the intracellular levels of glutathione that is essential for cells protection from oxidative stress. The transport is sodium-independent, electroneutral with a stoichiometry of 1:1, and is drove by the high intracellular concentration of L-glutamate and the intracellular reduction of L-cystine. In addition, mediates the import of L-kynurenine leading to anti-ferroptotic signaling propagation required to maintain L-cystine and glutathione homeostasis. Moreover, mediates N-acetyl-L-cysteine uptake into the placenta leading to subsequently down-regulation of pathways associated with oxidative stress, inflammation and apoptosis. In vitro can also transport L-aspartate. May participate in astrocyte and meningeal cell proliferation during development and can provide neuroprotection by promoting glutathione synthesis and delivery from non-neuronal cells such as astrocytes and meningeal cells to immature neurons. Controls the production of pheomelanin pigment directly. The chain is Cystine/glutamate transporter from Pongo abelii (Sumatran orangutan).